The sequence spans 358 residues: Homoserine O-acetyltransferase (358 aa).

The region spanning 41–343 (NAVLICHALT…DYGHDAFLVD (303 aa)) is the AB hydrolase-1 domain. Serine 143 acts as the Nucleophile in catalysis. Substrate is bound at residue arginine 212. Residues aspartate 304 and histidine 337 contribute to the active site. Aspartate 338 contributes to the substrate binding site.

In terms of assembly, homodimer.

The protein resides in the cytoplasm. The enzyme catalyses L-homoserine + acetyl-CoA = O-acetyl-L-homoserine + CoA. Its pathway is amino-acid biosynthesis; L-methionine biosynthesis via de novo pathway; O-acetyl-L-homoserine from L-homoserine: step 1/1. Transfers an acetyl group from acetyl-CoA to L-homoserine, forming acetyl-L-homoserine. Utilizes a ping-pong kinetic mechanism in which the acetyl group of acetyl-CoA is initially transferred to the enzyme to form an acetyl-enzyme intermediate before subsequent transfer to homoserine to form the final product, O-acetylhomoserine. The protein is Homoserine O-acetyltransferase of Haemophilus influenzae (strain ATCC 51907 / DSM 11121 / KW20 / Rd).